Here is a 465-residue protein sequence, read N- to C-terminus: MEYLPLFHNLKGRTVLIVGGGEIALRKARLLSEAGARLRVVAPSIEAQLVELVQAGAGECLDRGYARQDLQGCVLAIAATDDEPLNATVSQHANALGVPVNVVDSPQLCSVIFPAIVDRSPLVVAVSSGGDAPVLARLIRARIETWIPAAYGQLAGLAKQFRAQVKARFANVQQRRVFWEEVFQGPIAEQALAGRTAEAERLLAEKLAGVAPKALGEVYLVGAGPGDPDLLTFRALRLMQQADVVLYDRLVAPAIIDLCRRDADRIYVGKQRADHAVPQEQINQQLVTLAKQGKRVLRLKGGDPFIFGRGGEEIEELAAHGVPFQVVPGITAASGCAAYAGIPLTHRDHAQSVRFVTGHLKDGSCDLPWSELAAPAQTLVFYMGLVGLPVICQQLIAHGRSAETPAALVQQGTTSNQRVFTATLGTLAGRIAQEDVQAPTLLIVGEVVQLREKLAWFEGAQAAGR.

Residues 1 to 203 (MEYLPLFHNL…GRTAEAERLL (203 aa)) form a precorrin-2 dehydrogenase /sirohydrochlorin ferrochelatase region. NAD(+)-binding positions include 22–23 (EI) and 43–44 (PS). The residue at position 128 (serine 128) is a Phosphoserine. Residues 216–465 (GEVYLVGAGP…WFEGAQAAGR (250 aa)) are uroporphyrinogen-III C-methyltransferase. Proline 225 provides a ligand contact to S-adenosyl-L-methionine. Aspartate 248 (proton acceptor) is an active-site residue. Lysine 270 functions as the Proton donor in the catalytic mechanism. S-adenosyl-L-methionine contacts are provided by residues 301–303 (GGD), isoleucine 306, 331–332 (TA), methionine 383, and glycine 412.

The protein in the N-terminal section; belongs to the precorrin-2 dehydrogenase / sirohydrochlorin ferrochelatase family. This sequence in the C-terminal section; belongs to the precorrin methyltransferase family.

It catalyses the reaction uroporphyrinogen III + 2 S-adenosyl-L-methionine = precorrin-2 + 2 S-adenosyl-L-homocysteine + H(+). It carries out the reaction precorrin-2 + NAD(+) = sirohydrochlorin + NADH + 2 H(+). The enzyme catalyses siroheme + 2 H(+) = sirohydrochlorin + Fe(2+). It participates in cofactor biosynthesis; adenosylcobalamin biosynthesis; precorrin-2 from uroporphyrinogen III: step 1/1. It functions in the pathway cofactor biosynthesis; adenosylcobalamin biosynthesis; sirohydrochlorin from precorrin-2: step 1/1. Its pathway is porphyrin-containing compound metabolism; siroheme biosynthesis; precorrin-2 from uroporphyrinogen III: step 1/1. The protein operates within porphyrin-containing compound metabolism; siroheme biosynthesis; siroheme from sirohydrochlorin: step 1/1. It participates in porphyrin-containing compound metabolism; siroheme biosynthesis; sirohydrochlorin from precorrin-2: step 1/1. Functionally, multifunctional enzyme that catalyzes the SAM-dependent methylations of uroporphyrinogen III at position C-2 and C-7 to form precorrin-2 via precorrin-1. Then it catalyzes the NAD-dependent ring dehydrogenation of precorrin-2 to yield sirohydrochlorin. Finally, it catalyzes the ferrochelation of sirohydrochlorin to yield siroheme. The sequence is that of Siroheme synthase from Stutzerimonas stutzeri (strain A1501) (Pseudomonas stutzeri).